The following is a 134-amino-acid chain: MIIGIGSDLIDIRRVEKSIERFGERFTHRCFTEVERARSDRRANRAASYAKRFAAKEACSKALGTGIAQGVFWKDMGVVNLPSGKPTMQLTGTAAVLLEAILPAGHRAAIHLTITDDYPLAQAFVIIEALPESP.

Mg(2+)-binding residues include D8 and E57.

Belongs to the P-Pant transferase superfamily. AcpS family. Requires Mg(2+) as cofactor.

The protein resides in the cytoplasm. The catalysed reaction is apo-[ACP] + CoA = holo-[ACP] + adenosine 3',5'-bisphosphate + H(+). Transfers the 4'-phosphopantetheine moiety from coenzyme A to a Ser of acyl-carrier-protein. This Rhizobium etli (strain ATCC 51251 / DSM 11541 / JCM 21823 / NBRC 15573 / CFN 42) protein is Holo-[acyl-carrier-protein] synthase.